The chain runs to 171 residues: S-ribosylhomocysteine lyase (171 aa).

Fe cation is bound by residues His-54, His-58, and Cys-128.

It belongs to the LuxS family. As to quaternary structure, homodimer. The cofactor is Fe cation.

It catalyses the reaction S-(5-deoxy-D-ribos-5-yl)-L-homocysteine = (S)-4,5-dihydroxypentane-2,3-dione + L-homocysteine. Involved in the synthesis of autoinducer 2 (AI-2) which is secreted by bacteria and is used to communicate both the cell density and the metabolic potential of the environment. The regulation of gene expression in response to changes in cell density is called quorum sensing. Catalyzes the transformation of S-ribosylhomocysteine (RHC) to homocysteine (HC) and 4,5-dihydroxy-2,3-pentadione (DPD). The chain is S-ribosylhomocysteine lyase from Aliarcobacter butzleri (strain RM4018) (Arcobacter butzleri).